The sequence spans 1477 residues: Alpha-1-inhibitor 3 (1477 aa).

An N-terminal signal peptide occupies residues M1–L24. A disulfide bond links C48 and C86. N55 and N247 each carry an N-linked (GlcNAc...) asparagine glycan. 2 disulfide bridges follow: C251/C295 and C269/C283. N-linked (GlcNAc...) asparagine glycosylation is found at N301, N321, N393, and N508. 3 disulfides stabilise this stretch: C468–C563, C595–C774, and C643–C678. Residues D601 to N750 are bait region (approximate). 3 N-linked (GlcNAc...) asparagine glycosylation sites follow: N750, N777, and N872. Cystine bridges form between C850–C886, C924–C1324, C1082–C1130, and C1355–C1470. The isoglutamyl cysteine thioester (Cys-Gln) cross-link spans C975–Q978. N-linked (GlcNAc...) asparagine glycosylation is present at N994. 3 N-linked (GlcNAc...) asparagine glycosylation sites follow: N1143, N1314, and N1427.

This sequence belongs to the protease inhibitor I39 (alpha-2-macroglobulin) family. In terms of assembly, monomer.

The protein resides in the secreted. Protease inhibitor with a wide spectrum of protein targets, which attaches through its thioester function. In Rattus norvegicus (Rat), this protein is Alpha-1-inhibitor 3 (A1i3).